Here is a 622-residue protein sequence, read N- to C-terminus: 4-hydroxyphenylalkanoate adenylyltransferase (622 aa).

It belongs to the ATP-dependent AMP-binding enzyme family.

It carries out the reaction 17-(4-hydroxyphenyl)heptadecanoate + holo-[(phenol)carboxyphthiodiolenone synthase] + ATP = 17-(4-hydroxyphenyl)heptadecanoyl-[(phenol)carboxyphthiodiolenone synthase] + AMP + diphosphate. The enzyme catalyses 19-(4-hydroxyphenyl)nonadecanoate + holo-[(phenol)carboxyphthiodiolenone synthase] + ATP = 19-(4-hydroxyphenyl)nonadecanoyl-[(phenol)carboxyphthiodiolenone synthase] + AMP + diphosphate. It functions in the pathway lipid metabolism; fatty acid biosynthesis. Catalyzes the activation of long-chain fatty acids as acyl-adenylates (acyl-AMP), which are then transferred to the multifunctional polyketide synthase PpsA for further chain extension. Involved in the biosynthesis of phenolphthiocerol, which is an important intermediate in the biosynthesis of phenolic glycolipid (PGL), also called mycosid B. The protein is 4-hydroxyphenylalkanoate adenylyltransferase (fadD29) of Mycobacterium marinum (strain ATCC BAA-535 / M).